Reading from the N-terminus, the 222-residue chain is Glutathione S-transferase A2 (222 aa).

Ala2 carries the N-acetylalanine modification. One can recognise a GST N-terminal domain in the interval Glu3 to Gly83. N6-succinyllysine is present on Lys4. Glutathione contacts are provided by residues Tyr9, Arg45, Gln54–Val55, and Gln67–Thr68. A GST C-terminal domain is found at Asp85 to Pro207. Residues Gln199–Phe222 form a disordered region. Residues Pro206–Phe222 show a composition bias toward basic and acidic residues.

This sequence belongs to the GST superfamily. Alpha family. Homodimer or heterodimer of GSTA1 and GSTA2. Liver.

It is found in the cytoplasm. It carries out the reaction RX + glutathione = an S-substituted glutathione + a halide anion + H(+). In terms of biological role, catalyzes the conjugation of glutathione to a large variety of electrophilic compounds. This chain is Glutathione S-transferase A2 (GSTA2), found in Homo sapiens (Human).